A 414-amino-acid polypeptide reads, in one-letter code: NAC domain-containing protein 35 (414 aa).

A compositionally biased stretch (polar residues) spans 1–21; the sequence is MAIVSSTTSIIPMSNQVNNNE. The disordered stretch occupies residues 1-47; that stretch reads MAIVSSTTSIIPMSNQVNNNEKGIEDNDHRGGQESHVQNEDEADDHD. Residues 22 to 47 show a composition bias toward basic and acidic residues; sequence KGIEDNDHRGGQESHVQNEDEADDHD. Residues 51 to 198 enclose the NAC domain; sequence VMPGFRFHPT…EISLCRVYKR (148 aa). Residues 149-204 mediate DNA binding; sequence IGLKKTLVFYSGKAPKGTRTSWIMNEYRLPHHETEKYQKAEISLCRVYKRPGVEDH. The tract at residues 200–251 is disordered; sequence GVEDHPSVPRSLSTRHHNHNSSTSSRLALRQQQHHSSSSNHSDNNLNNNNNI. Low complexity predominate over residues 233–251; sequence HHSSSSNHSDNNLNNNNNI.

Expressed in aerial organs in early stages of seedling development.

It localises to the nucleus. Transcription factor that acts as a floral repressor. Controls flowering time by negatively regulating CONSTANS (CO) expression in a GIGANTEA (GI)-independent manner. Regulates the plant cold response by positive regulation of the cold response genes COR15A and KIN1. May coordinate cold response and flowering time. In Arabidopsis thaliana (Mouse-ear cress), this protein is NAC domain-containing protein 35.